We begin with the raw amino-acid sequence, 447 residues long: N-succinylarginine dihydrolase (447 aa).

Residues 19–28 (AGLSFGNEAS), Asn110, and 137–138 (HR) each bind substrate. Residue Glu174 is part of the active site. Residue Arg212 coordinates substrate. The active site involves His248. The substrate site is built by Asp250 and Asn359. Cys365 functions as the Nucleophile in the catalytic mechanism.

This sequence belongs to the succinylarginine dihydrolase family. Homodimer.

The catalysed reaction is N(2)-succinyl-L-arginine + 2 H2O + 2 H(+) = N(2)-succinyl-L-ornithine + 2 NH4(+) + CO2. It participates in amino-acid degradation; L-arginine degradation via AST pathway; L-glutamate and succinate from L-arginine: step 2/5. Catalyzes the hydrolysis of N(2)-succinylarginine into N(2)-succinylornithine, ammonia and CO(2). In Escherichia coli (strain SMS-3-5 / SECEC), this protein is N-succinylarginine dihydrolase.